The sequence spans 165 residues: NADH-quinone oxidoreductase subunit I (165 aa).

4Fe-4S ferredoxin-type domains follow at residues 57-86 (RRYENGEERCIACKLCEAVCPALAITIESD) and 96-125 (SRYDIDLTKCIFCGFCEESCPVDSIVETHI). [4Fe-4S] cluster is bound by residues C66, C69, C72, C76, C105, C108, C111, and C115.

It belongs to the complex I 23 kDa subunit family. NDH-1 is composed of 14 different subunits. Subunits NuoA, H, J, K, L, M, N constitute the membrane sector of the complex. [4Fe-4S] cluster serves as cofactor.

It localises to the cell inner membrane. It carries out the reaction a quinone + NADH + 5 H(+)(in) = a quinol + NAD(+) + 4 H(+)(out). NDH-1 shuttles electrons from NADH, via FMN and iron-sulfur (Fe-S) centers, to quinones in the respiratory chain. The immediate electron acceptor for the enzyme in this species is believed to be ubiquinone. Couples the redox reaction to proton translocation (for every two electrons transferred, four hydrogen ions are translocated across the cytoplasmic membrane), and thus conserves the redox energy in a proton gradient. This chain is NADH-quinone oxidoreductase subunit I, found in Polaromonas naphthalenivorans (strain CJ2).